We begin with the raw amino-acid sequence, 228 residues long: uncharacterized protein (228 aa).

This is an uncharacterized protein from Methanocaldococcus jannaschii (strain ATCC 43067 / DSM 2661 / JAL-1 / JCM 10045 / NBRC 100440) (Methanococcus jannaschii).